The sequence spans 199 residues: Ubiquitin-conjugating enzyme E2-22 kDa (199 aa).

The UBC core domain maps to 4-154 (MAVSRIKREF…AKHWTNAYAG (151 aa)). Cys-92 serves as the catalytic Glycyl thioester intermediate. The UBA domain maps to 161–199 (DCDSKIQRLRDMGIDEHEARAVLSKENWNLEKATEGLFS).

The protein belongs to the ubiquitin-conjugating enzyme family. In terms of assembly, interacts with Rpn10. During gastrulation, expression is highest in the invaginating posterior midgut primordium (PMG), high expression is also observed in the cephalic furrow and ventral ectodermal neurogenic region. In stage 10-11 embryos, expression is high in the pole cells present in the pocket formed by the PMG. During germ band retraction, expression appears to reinitiate in many tissues, especially the gut and nervous system. After dorsal closure, expression is detectable at low levels throughout the embryo.

The catalysed reaction is S-ubiquitinyl-[E1 ubiquitin-activating enzyme]-L-cysteine + [E2 ubiquitin-conjugating enzyme]-L-cysteine = [E1 ubiquitin-activating enzyme]-L-cysteine + S-ubiquitinyl-[E2 ubiquitin-conjugating enzyme]-L-cysteine.. The protein operates within protein modification; protein ubiquitination. In terms of biological role, catalyzes the covalent attachment of ubiquitin to other proteins. This is Ubiquitin-conjugating enzyme E2-22 kDa from Drosophila melanogaster (Fruit fly).